The following is a 483-amino-acid chain: AP-3 complex subunit mu (483 aa).

Positions 211-482 (NNELYVDLLE…KTQTGNFQVR (272 aa)) constitute an MHD domain.

This sequence belongs to the adaptor complexes medium subunit family. Adaptor protein complex 3 (AP-3) is a heterotetramer composed of 2 large adaptins (APL5 and APL6), a medium adaptin (APM3) and a small adaptin (APS3).

Its subcellular location is the golgi apparatus. It localises to the cytoplasmic vesicle membrane. Its function is as follows. Part of the AP-3 complex, an adaptor-related complex which is not clathrin-associated. The complex is associated with the Golgi region as well as more peripheral structures. It facilitates the budding of vesicles from the Golgi membrane and may be directly involved in trafficking to the vacuole. Required for the transport via the ALP pathway, which directs the transport of the cargo proteins PHO8 and VAM3 to the vacuole. This is AP-3 complex subunit mu (APM3) from Saccharomyces cerevisiae (strain ATCC 204508 / S288c) (Baker's yeast).